The primary structure comprises 49 residues: Defensin-like protein 1 (49 aa).

Disulfide bonds link C3–C49, C14–C35, C20–C43, and C24–C45.

The protein belongs to the DEFL family.

Its subcellular location is the secreted. In terms of biological role, possesses antimicrobial activity sensitive to inorganic cations. Binds specifically to the fungal plasma membrane. Has no inhibitory effect on insect gut alpha-amylase. The chain is Defensin-like protein 1 from Clitoria ternatea (Butterfly pea).